Reading from the N-terminus, the 455-residue chain is Major capsid protein (455 aa).

This sequence belongs to the ascoviridae capsid protein family.

It is found in the virion. Its function is as follows. Major protein of the capsid. The chain is Major capsid protein (MCP) from Heliothis virescens ascovirus 3e (HvAV-3e).